The sequence spans 376 residues: MSQDYYQILGVSKTANSADLKKAYHKLAKQYHPDNAASGDTNAEKKFKEINAAYEVLKDEQKRAAYDRFGHDAFQNQQARGGAGSQGGHPFGADINDIFGDFFSDFMGGGGRRKPTSSKVRGSDLKYNLTINLEEAFHGVEKNISFSSEVKCDTCHGSGSEKGETTTTCDACGGVGATRVQQGFFMIEQTCHKCQGNGQIIKNPCKKCHGLGRYHKQRNLSVNIPAGVENGTRIRHPGEGEAGIRGGNNGDLYVDIAIKPHDIYKVDGANLHCKLPISFVNAALGGEVAVPVIEGGKVNLTIPAGTQNGDQLRLCGKGMSKIRSTIRGDMLAHVHVEVPKNLSKRQRELLEELRGESANEKENDGSFFNKMKSLWS.

The region spanning 4–70 (DYYQILGVSK…QKRAAYDRFG (67 aa)) is the J domain. The CR-type zinc-finger motif lies at 139 to 217 (GVEKNISFSS…CHGLGRYHKQ (79 aa)). Residues Cys-152, Cys-155, Cys-169, Cys-172, Cys-191, Cys-194, Cys-205, and Cys-208 each coordinate Zn(2+). CXXCXGXG motif repeat units follow at residues 152-159 (CDTCHGSG), 169-176 (CDACGGVG), 191-198 (CHKCQGNG), and 205-212 (CKKCHGLG).

The protein belongs to the DnaJ family. In terms of assembly, homodimer. Zn(2+) serves as cofactor.

It is found in the cytoplasm. Functionally, participates actively in the response to hyperosmotic and heat shock by preventing the aggregation of stress-denatured proteins and by disaggregating proteins, also in an autonomous, DnaK-independent fashion. Unfolded proteins bind initially to DnaJ; upon interaction with the DnaJ-bound protein, DnaK hydrolyzes its bound ATP, resulting in the formation of a stable complex. GrpE releases ADP from DnaK; ATP binding to DnaK triggers the release of the substrate protein, thus completing the reaction cycle. Several rounds of ATP-dependent interactions between DnaJ, DnaK and GrpE are required for fully efficient folding. Also involved, together with DnaK and GrpE, in the DNA replication of plasmids through activation of initiation proteins. This chain is Chaperone protein DnaJ, found in Rickettsia bellii (strain RML369-C).